Consider the following 436-residue polypeptide: 3-ketoacyl-CoA thiolase (436 aa).

The Acyl-thioester intermediate role is filled by cysteine 99. Active-site proton acceptor residues include histidine 392 and cysteine 422.

This sequence belongs to the thiolase-like superfamily. Thiolase family. In terms of assembly, heterotetramer of two alpha chains (FadJ) and two beta chains (FadI).

The protein localises to the cytoplasm. The enzyme catalyses an acyl-CoA + acetyl-CoA = a 3-oxoacyl-CoA + CoA. The protein operates within lipid metabolism; fatty acid beta-oxidation. Catalyzes the final step of fatty acid oxidation in which acetyl-CoA is released and the CoA ester of a fatty acid two carbons shorter is formed. The chain is 3-ketoacyl-CoA thiolase from Alteromonas mediterranea (strain DSM 17117 / CIP 110805 / LMG 28347 / Deep ecotype).